Consider the following 930-residue polypeptide: Inter-alpha-trypsin inhibitor heavy chain H4 (930 aa).

Residues 1–28 (MKPPRPVRTCSKVLVLLSLLAIHQTTTA) form the signal peptide. The VIT domain maps to 29 to 148 (EKNGIDIYSL…KITFELVYEE (120 aa)). N-linked (GlcNAc...) asparagine glycosylation is found at N81 and N207. In terms of domain architecture, VWFA spans 272-432 (PKNVVFVIDK…YAFLEKLALD (161 aa)). Residue N274 is glycosylated (N-linked (GlcNAc...) asparagine; atypical). Residues N517 and N577 are each glycosylated (N-linked (GlcNAc...) asparagine). The disordered stretch occupies residues 595 to 618 (KPDDQEQSQVAEKPMEGESRNRNV). The proline-rich (PRR) potential bioactive peptide stretch occupies residues 658 to 688 (MNFRPGVLSSRQLGLPGPPDVPDHAAYHPFR). Residues 662 to 688 (PGVLSSRQLGLPGPPDVPDHAAYHPFR) constitute a propeptide, potentially active peptide. Residues T719, T720, and T722 are each glycosylated (O-linked (GalNAc...) threonine). An O-glycosylated at three sites region spans residues 719–725 (TTMTTQT). A disulfide bond links C747 and C925.

It belongs to the ITIH family. In terms of assembly, interacts (via C-terminus) with DNAJC1 (via SANT 2 domain); this interaction protects ITIH4 against cleavage by kallikrein in vitro. Post-translationally, cleaved by plasma kallikrein to yield 100 kDa and 35 kDa fragments, and the resulting 100 kDa fragment is further converted to a 70 kDa fragment. N- and O-glycosylated. In urine, O-linked glycosylation on threonine residues in the region from Thr-719 to Thr-725 consists of core 1 or possibly core 8 glycans. Mainly Hex(HexNAc)(2), but also some Hex(3)(HexNAc)(3). N-glycosylated but not O-glycosylated in plasma. Liver specific.

The protein localises to the secreted. In terms of biological role, type II acute-phase protein (APP) involved in inflammatory responses to trauma. May also play a role in liver development or regeneration. The chain is Inter-alpha-trypsin inhibitor heavy chain H4 (ITIH4) from Homo sapiens (Human).